We begin with the raw amino-acid sequence, 116 residues long: Large ribosomal subunit protein bL19 (116 aa).

The protein belongs to the bacterial ribosomal protein bL19 family.

Its function is as follows. This protein is located at the 30S-50S ribosomal subunit interface and may play a role in the structure and function of the aminoacyl-tRNA binding site. The polypeptide is Large ribosomal subunit protein bL19 (Pseudomonas savastanoi pv. phaseolicola (strain 1448A / Race 6) (Pseudomonas syringae pv. phaseolicola (strain 1448A / Race 6))).